Here is a 255-residue protein sequence, read N- to C-terminus: Indole-3-glycerol phosphate synthase (255 aa).

This sequence belongs to the TrpC family.

The enzyme catalyses 1-(2-carboxyphenylamino)-1-deoxy-D-ribulose 5-phosphate + H(+) = (1S,2R)-1-C-(indol-3-yl)glycerol 3-phosphate + CO2 + H2O. It functions in the pathway amino-acid biosynthesis; L-tryptophan biosynthesis; L-tryptophan from chorismate: step 4/5. The protein is Indole-3-glycerol phosphate synthase of Streptococcus pneumoniae (strain 70585).